Reading from the N-terminus, the 512-residue chain is Histidine ammonia-lyase (512 aa).

The segment at residues 141-143 is a cross-link (5-imidazolinone (Ala-Gly)); sequence ASG. 2,3-didehydroalanine (Ser) is present on serine 142.

This sequence belongs to the PAL/histidase family. In terms of processing, contains an active site 4-methylidene-imidazol-5-one (MIO), which is formed autocatalytically by cyclization and dehydration of residues Ala-Ser-Gly.

Its subcellular location is the cytoplasm. It carries out the reaction L-histidine = trans-urocanate + NH4(+). It participates in amino-acid degradation; L-histidine degradation into L-glutamate; N-formimidoyl-L-glutamate from L-histidine: step 1/3. In Bacillus velezensis (strain DSM 23117 / BGSC 10A6 / LMG 26770 / FZB42) (Bacillus amyloliquefaciens subsp. plantarum), this protein is Histidine ammonia-lyase.